Here is a 135-residue protein sequence, read N- to C-terminus: Ribonuclease VapC5 (135 aa).

Residues 9 to 130 (VLDTSVFIAT…FAALDGAASV (122 aa)) form the PINc domain. Mg(2+) is bound by residues aspartate 11 and aspartate 100.

It belongs to the PINc/VapC protein family. As to quaternary structure, forms a complex with VapB5. The cofactor is Mg(2+).

Its subcellular location is the secreted. Its function is as follows. Probable toxic component of a type II toxin-antitoxin (TA) system. The cognate antitoxin is VapB5. Has limited RNase activity on substrates; activity is seen with a VapC5-VapB5 complex. This Mycobacterium tuberculosis (strain ATCC 25618 / H37Rv) protein is Ribonuclease VapC5.